The primary structure comprises 401 residues: Tryptophan synthase beta chain (401 aa).

Lysine 91 carries the post-translational modification N6-(pyridoxal phosphate)lysine.

It belongs to the TrpB family. In terms of assembly, tetramer of two alpha and two beta chains. The cofactor is pyridoxal 5'-phosphate.

The enzyme catalyses (1S,2R)-1-C-(indol-3-yl)glycerol 3-phosphate + L-serine = D-glyceraldehyde 3-phosphate + L-tryptophan + H2O. It participates in amino-acid biosynthesis; L-tryptophan biosynthesis; L-tryptophan from chorismate: step 5/5. Functionally, the beta subunit is responsible for the synthesis of L-tryptophan from indole and L-serine. This Lactococcus lactis subsp. cremoris (strain MG1363) protein is Tryptophan synthase beta chain.